A 222-amino-acid chain; its full sequence is Methylthioribulose-1-phosphate dehydratase (222 aa).

Positions 94 and 96 each coordinate Zn(2+).

Belongs to the aldolase class II family. MtnB subfamily. It depends on Zn(2+) as a cofactor.

It carries out the reaction 5-(methylsulfanyl)-D-ribulose 1-phosphate = 5-methylsulfanyl-2,3-dioxopentyl phosphate + H2O. Its pathway is amino-acid biosynthesis; L-methionine biosynthesis via salvage pathway; L-methionine from S-methyl-5-thio-alpha-D-ribose 1-phosphate: step 2/6. Catalyzes the dehydration of methylthioribulose-1-phosphate (MTRu-1-P) into 2,3-diketo-5-methylthiopentyl-1-phosphate (DK-MTP-1-P). The polypeptide is Methylthioribulose-1-phosphate dehydratase (Yersinia pseudotuberculosis serotype O:1b (strain IP 31758)).